Consider the following 437-residue polypeptide: Vitellogenin-1 (437 aa).

A signal peptide spans 1-19 (MNPLKIFCFLALVIAVASA). Disordered regions lie at residues 161 to 194 (QQQPINGNKDYDYGSSQGNQGATSSEEDYSESWK) and 405 to 437 (PKSPFGKSAPAQKQRRYHGLHQSWKSGKNQNQE). Polar residues-rich tracts occupy residues 174–184 (GSSQGNQGATS) and 427–437 (SWKSGKNQNQE).

The protein belongs to the AB hydrolase superfamily. Lipase family. Synthesized in the fat body and ovarian follicle cells and accumulate in the oocyte.

It localises to the secreted. Its function is as follows. Vitellogenin is the major yolk protein of eggs where it is used as a food source during embryogenesis. The chain is Vitellogenin-1 (VG1-GAMMA) from Ceratitis capitata (Mediterranean fruit fly).